The sequence spans 603 residues: MLLPCALLAALLAAGHAANPCCSLPCQNRGVCMTTGFDRYECDCTRTGYYGENCTTPEFFTWLKLILKPTPNTVHYILTHFKGVWNIINNISFLRDTIMRYVLTSRSHLIDSPPTYNSDYSYKSWEAYSNLSYYTRSLPPVGHDCPTPMGVKGKKELPDSKLIVEKFLLRRKFIPDPQGTNVMFTFFAQHFTHQFFKTDHKKGPGFTKAYGHGVDLNHIYGETLERQLKLRLRKDGKLKYQMIDGEMYPPTVKDTQAEMIYPPHVPEHLQFSVGQEVFGLVPGLMMYATIWLREHNRVCDVLKQEHPEWDDEQLFQTTRLILIGETIKIVIEDYVQHLSGYHFKLKFDPELLFNQRFQYQNRIAAEFNTLYHWHPLLPDTFQIHNQEYTFQQFLYNNSIMLEHGLSHMVKSFSKQSAGRVAGGKNVPAAVQKVAKASIDQSRQMRYQSLNEYRKRFMLKPFKSFEELTGEKEMAAELEELYGDIDAMELYPGLLVEKPRPGAIFGETMVEIGAPFSLKGLMGNTICSPEYWKPSTFGGKVGFEIINTASLQKLICNNVKGCPFTAFHVLNPEPTEATINVSTSNTAMEDINPTLLLKEQSAEL.

Positions 1-17 (MLLPCALLAALLAAGHA) are cleaved as a signal peptide. In terms of domain architecture, EGF-like spans 18 to 55 (ANPCCSLPCQNRGVCMTTGFDRYECDCTRTGYYGENCT). 4 disulfide bridges follow: Cys-21–Cys-32, Cys-22–Cys-145, Cys-26–Cys-42, and Cys-44–Cys-54. N-linked (GlcNAc...) asparagine glycosylation is found at Asn-53 and Asn-90. Arg-106 is a binding site for substrate. Asn-130 is a glycosylation site (N-linked (GlcNAc...) asparagine). The Proton acceptor role is filled by His-193. Substrate is bound at residue Tyr-341. Tyr-371 serves as the catalytic For cyclooxygenase activity. Heme b is bound at residue His-374. Cys-555 and Cys-561 are disulfide-bonded.

It belongs to the prostaglandin G/H synthase family. As to quaternary structure, homodimer. It depends on heme b as a cofactor.

It is found in the microsome membrane. The protein localises to the endoplasmic reticulum membrane. It carries out the reaction (5Z,8Z,11Z,14Z)-eicosatetraenoate + AH2 + 2 O2 = prostaglandin H2 + A + H2O. It catalyses the reaction (9Z,12Z)-octadecadienoate + AH2 + O2 = (9R)-hydroxy-(10E,12Z)-octadecadienoate + A + H2O. The catalysed reaction is (9Z,12Z)-octadecadienoate + AH2 + O2 = (9S)-hydroxy-(10E,12Z)-octadecadienoate + A + H2O. The enzyme catalyses (9Z,12Z)-octadecadienoate + AH2 + O2 = (13S)-hydroxy-(9Z,11E)-octadecadienoate + A + H2O. It carries out the reaction (9Z,12Z)-octadecadienoate + AH2 + O2 = (13R)-hydroxy-(9Z,11E)-octadecadienoate + A + H2O. The protein operates within lipid metabolism; prostaglandin biosynthesis. Its function is as follows. Dual cyclooxygenase and peroxidase in the biosynthesis pathway of prostanoids, a class of C20 oxylipins mainly derived from arachidonate ((5Z,8Z,11Z,14Z)-eicosatetraenoate, AA, C20:4(n-6)), with a particular role in the inflammatory response. The cyclooxygenase activity oxygenates AA to the hydroperoxy endoperoxide prostaglandin G2 (PGG2), and the peroxidase activity reduces PGG2 to the hydroxy endoperoxide prostaglandin H2 (PGH2), the precursor of all 2-series prostaglandins and thromboxanes. This complex transformation is initiated by abstraction of hydrogen at carbon 13 (with S-stereochemistry), followed by insertion of molecular O2 to form the endoperoxide bridge between carbon 9 and 11 that defines prostaglandins. The insertion of a second molecule of O2 (bis-oxygenase activity) yields a hydroperoxy group in PGG2 that is then reduced to PGH2 by two electrons. Similarly catalyzes successive cyclooxygenation and peroxidation of dihomo-gamma-linoleate (DGLA, C20:3(n-6)) and eicosapentaenoate (EPA, C20:5(n-3)) to corresponding PGH1 and PGH3, the precursors of 1- and 3-series prostaglandins. In an alternative pathway of prostanoid biosynthesis, converts 2-arachidonoyl lysophopholipids to prostanoid lysophopholipids, which are then hydrolyzed by intracellular phospholipases to release free prostanoids. Metabolizes 2-arachidonoyl glycerol yielding the glyceryl ester of PGH2, a process that can contribute to pain response. Generates lipid mediators from n-3 and n-6 polyunsaturated fatty acids (PUFAs) via a lipoxygenase-type mechanism. Oxygenates PUFAs to hydroperoxy compounds and then reduces them to corresponding alcohols. Plays a role in the generation of resolution phase interaction products (resolvins) during both sterile and infectious inflammation. Metabolizes docosahexaenoate (DHA, C22:6(n-3)) to 17R-HDHA, a precursor of the D-series resolvins (RvDs). As a component of the biosynthetic pathway of E-series resolvins (RvEs), converts eicosapentaenoate (EPA, C20:5(n-3)) primarily to 18S-HEPE that is further metabolized by ALOX5 and LTA4H to generate 18S-RvE1 and 18S-RvE2. In vascular endothelial cells, converts docosapentaenoate (DPA, C22:5(n-3)) to 13R-HDPA, a precursor for 13-series resolvins (RvTs) shown to activate macrophage phagocytosis during bacterial infection. In activated leukocytes, contributes to oxygenation of hydroxyeicosatetraenoates (HETE) to diHETES (5,15-diHETE and 5,11-diHETE). Can also use linoleate (LA, (9Z,12Z)-octadecadienoate, C18:2(n-6)) as substrate and produce hydroxyoctadecadienoates (HODEs) in a regio- and stereospecific manner, being (9R)-HODE ((9R)-hydroxy-(10E,12Z)-octadecadienoate) and (13S)-HODE ((13S)-hydroxy-(9Z,11E)-octadecadienoate) its major products. During neuroinflammation, plays a role in neuronal secretion of specialized preresolving mediators (SPMs) 15R-lipoxin A4 that regulates phagocytic microglia. This is Prostaglandin G/H synthase 2 (PTGS2) from Gallus gallus (Chicken).